Consider the following 466-residue polypeptide: MPHSYDYDAIVIGSGPGGEGAAMGLVKQGARVAVIERYQNVGGGCTHWGTIPSKALRHAVSRIIEFNQNPLYSDHSRLLRSSFADILNHADNVINQQTRMRQGFYERNHCEILQGNARFVDEHTLALDCPDGSVETLTAEKFVIACGSRPYHPTDVDFTHPRIYDSDSILSMHHEPRHVLIYGAGVIGCEYASIFRGMDVKVDLINTRDRLLAFLDQEMSDSLSYHFWNSGVVIRHNEEYEKIEGCDDGVIMHLKSGKKLKADCLLYANGRTGNTDSLALQNIGLETDSRGQLKVNSMYQTAQPHVYAVGDVIGYPSLASAAYDQGRIAAQALVKGEATAHLIEDIPTGIYTIPEISSVGKTEQLLTAMKVPYEVGRAQFKHLARAQIVGMNVGTLKILFHRETKEILGIHCFGERAAEIIHIGQAIMEQKGGGNTIEYFVNTTFNYPTMAEAYRVAALNGLNRLF.

36 to 45 contributes to the FAD binding site; that stretch reads ERYQNVGGGC.

The protein belongs to the class-I pyridine nucleotide-disulfide oxidoreductase family. Homooligomer; probable homooctamer. The cofactor is FAD.

Its subcellular location is the cytoplasm. The catalysed reaction is NAD(+) + NADPH = NADH + NADP(+). In terms of biological role, conversion of NADPH, generated by peripheral catabolic pathways, to NADH, which can enter the respiratory chain for energy generation. In Escherichia coli O157:H7, this protein is Soluble pyridine nucleotide transhydrogenase.